Consider the following 433-residue polypeptide: F-box only protein 15 (433 aa).

One can recognise an F-box domain in the interval 1–41; the sequence is MPSEILVKILSYLDAVTLVCIGCVSRRFYHLADDNLIWVRK.

Directly interacts with SKP1 and CUL1. Expressed in testis.

Functionally, substrate-recognition component of the SCF (SKP1-CUL1-F-box protein)-type E3 ubiquitin ligase complex. This is F-box only protein 15 (Fbxo15) from Mus musculus (Mouse).